A 196-amino-acid chain; its full sequence is Adenylate kinase (196 aa).

Residue 10 to 15 (GAGKGT) participates in ATP binding. Residues 30–59 (STGDMLRAAVSAGTEIGKRAKAVMDAGGLV) are NMP. Residues Thr-31, Arg-36, 57–59 (GLV), 85–88 (GYPR), and Gln-92 each bind AMP. Positions 126–142 (NRVAETIAAGGTVRSDD) are LID. Residue Arg-127 coordinates ATP. The AMP site is built by Arg-139 and Arg-150. Ala-178 is a binding site for ATP.

It belongs to the adenylate kinase family. As to quaternary structure, monomer.

Its subcellular location is the cytoplasm. It catalyses the reaction AMP + ATP = 2 ADP. The protein operates within purine metabolism; AMP biosynthesis via salvage pathway; AMP from ADP: step 1/1. In terms of biological role, catalyzes the reversible transfer of the terminal phosphate group between ATP and AMP. Plays an important role in cellular energy homeostasis and in adenine nucleotide metabolism. The polypeptide is Adenylate kinase (Agrobacterium fabrum (strain C58 / ATCC 33970) (Agrobacterium tumefaciens (strain C58))).